The chain runs to 100 residues: Tuberoinfundibular peptide of 39 residues (100 aa).

Positions Met-1–Thr-30 are cleaved as a signal peptide. A propeptide spanning residues Ala-31–Pro-59 is cleaved from the precursor.

Belongs to the parathyroid hormone family. Ligand of high affinity for the PTH2 receptor (PTH2R).

It localises to the secreted. Functionally, plays a role as a potent and selective agonist of PTH2R resulting in adenyl cyclase activation and intracellular calcium levels elevation. Induces protein kinase C beta activation, recruitment of beta-arrestin and PTH2R internalization. May inhibit cell proliferation via its action of PTH2R activation. Neuropeptide which may also have a role in spermatogenesis. May activate nociceptors and nociceptive circuits. The protein is Tuberoinfundibular peptide of 39 residues (PTH2) of Bos taurus (Bovine).